The chain runs to 617 residues: MEHNPKSQLKLLVTHGKEQGYLTYAEVNDHLPEEIIDSEQIDDIIQMINDMGIQVVEEAPDADDLILNEINTDTDEDAVEAATQVLSSVESELGRTTDPVRMYMREMGTVELLTREGEIDIAKRIEEGINQVQSSVSEYPEAITYLLEQYDRIKTGQIRLSDIITGFVDPNAEEIFSHSTSAIHIGSEILDNITNDSNENEDENEDENEDEDENSIDPELANEKFRELRKQYTNTSNTIKNKNRNHQDSLLEIYNLSEIFKQFRLVPKQFDHLVNNMRNMMNRVRKQERKIMKLCIEECKIPKKIFLKIFSGKETDQNWFKKEQSSNQSWSKKLEEIKEKVFSSMKKLKQIEKETGLTIEQVKDINKRMSIGEAKAKRAKKEMVEANLRLVISIAKKYTNRGLQFLDLIQEGNIGLMKAVDKFEYRRGYKFSTYATWWIRQAITRSIADQARTIRIPVHMIETINKLNRISRQMLQEIGREPTPEELSEKMLIPEDKIRKVLKIAKEPISMETPIGDDDDSHLGDFIEDTTLELPLDSATSESLRSATHDVLSGLTAREAKVLRMRFGIDMNTDHTLEEVGKQFDVTRERIRQIEAKALRKLRHPSRSEVLRSFLDD.

The tract at residues 192 to 222 (NITNDSNENEDENEDENEDEDENSIDPELAN) is disordered. Residues 198–216 (NENEDENEDENEDEDENSI) show a composition bias toward acidic residues. A sigma-70 factor domain-2 region spans residues 383–453 (MVEANLRLVI…TRSIADQART (71 aa)). Positions 407 to 410 (DLIQ) match the Interaction with polymerase core subunit RpoC motif. The segment at 462-538 (ETINKLNRIS…DTTLELPLDS (77 aa)) is sigma-70 factor domain-3. The sigma-70 factor domain-4 stretch occupies residues 551-604 (VLSGLTAREAKVLRMRFGIDMNTDHTLEEVGKQFDVTRERIRQIEAKALRKLRH). A DNA-binding region (H-T-H motif) is located at residues 577-596 (LEEVGKQFDVTRERIRQIEA).

This sequence belongs to the sigma-70 factor family. RpoD/SigA subfamily. In terms of assembly, interacts transiently with the RNA polymerase catalytic core.

It is found in the cytoplasm. Functionally, sigma factors are initiation factors that promote the attachment of RNA polymerase to specific initiation sites and are then released. This sigma factor is the primary sigma factor during exponential growth. This is RNA polymerase sigma factor RpoD from Buchnera aphidicola subsp. Schizaphis graminum (strain Sg).